A 279-amino-acid chain; its full sequence is Urease accessory protein UreD (279 aa).

This sequence belongs to the UreD family. UreD, UreF and UreG form a complex that acts as a GTP-hydrolysis-dependent molecular chaperone, activating the urease apoprotein by helping to assemble the nickel containing metallocenter of UreC. The UreE protein probably delivers the nickel.

It is found in the cytoplasm. Its function is as follows. Required for maturation of urease via the functional incorporation of the urease nickel metallocenter. This Pseudomonas fluorescens (strain Pf0-1) protein is Urease accessory protein UreD.